The sequence spans 543 residues: Protein B602L (543 aa).

13 repeat units span residues 161–164 (CAST), 165–168 (CAST), 169–172 (CAST), 173–176 (CAST), 177–180 (CADT), 181–184 (NVDT), 185–188 (CTDT), 189–192 (CAST), 193–196 (CADT), 197–200 (NVDT), 201–204 (CAST), 205–208 (CADT), and 209–212 (CAST). A 13 X 4 AA tandem repeats of [CN]-[ATV]-[DS]-T region spans residues 161–212 (CASTCASTCASTCASTCADTNVDTCTDTCASTCADTNVDTCASTCADTCAST).

Belongs to the asfivirus B602L family.

It is found in the host cytoplasm. In terms of biological role, plays an essential role in the assembly of the icosahedral capsid of the virus. Allows the assembly of 3 molecules of hexon protein p72 and formation of a thermostable trimer. The sequence is that of Protein B602L from African swine fever virus (isolate Pig/Kenya/KEN-50/1950) (ASFV).